The chain runs to 679 residues: Transketolase (679 aa).

Residue H30 coordinates substrate. Thiamine diphosphate-binding positions include H69 and 116–118 (GPL). D157 serves as a coordination point for Mg(2+). Residues G158 and N187 each contribute to the thiamine diphosphate site. N187 and I189 together coordinate Mg(2+). Substrate-binding residues include H262, R358, and S385. Thiamine diphosphate is bound at residue H262. Thiamine diphosphate contacts are provided by E417 and F444. The active-site Proton donor is E417. Positions 468, 476, and 527 each coordinate substrate.

This sequence belongs to the transketolase family. Homodimer. Requires Mg(2+) as cofactor. The cofactor is Ca(2+). Mn(2+) serves as cofactor. It depends on Co(2+) as a cofactor. Thiamine diphosphate is required as a cofactor.

It carries out the reaction D-sedoheptulose 7-phosphate + D-glyceraldehyde 3-phosphate = aldehydo-D-ribose 5-phosphate + D-xylulose 5-phosphate. Its function is as follows. Catalyzes the transfer of a two-carbon ketol group from a ketose donor to an aldose acceptor, via a covalent intermediate with the cofactor thiamine pyrophosphate. The polypeptide is Transketolase (TKL1) (Kluyveromyces lactis (strain ATCC 8585 / CBS 2359 / DSM 70799 / NBRC 1267 / NRRL Y-1140 / WM37) (Yeast)).